Here is a 54-residue protein sequence, read N- to C-terminus: Sec-independent protein translocase protein TatA (54 aa).

The helical transmembrane segment at 1 to 21 (MGMSFSHLLIVLLIIFVLFGA) threads the bilayer.

This sequence belongs to the TatA/E family. The Tat system comprises two distinct complexes: a TatABC complex, containing multiple copies of TatA, TatB and TatC subunits, and a separate TatA complex, containing only TatA subunits. Substrates initially bind to the TatABC complex, which probably triggers association of the separate TatA complex to form the active translocon.

The protein resides in the cell inner membrane. Its function is as follows. Part of the twin-arginine translocation (Tat) system that transports large folded proteins containing a characteristic twin-arginine motif in their signal peptide across membranes. TatA could form the protein-conducting channel of the Tat system. In Rickettsia canadensis (strain McKiel), this protein is Sec-independent protein translocase protein TatA.